We begin with the raw amino-acid sequence, 453 residues long: uncharacterized protein (453 aa).

The region spanning 5–63 (LLKKNQSVELTIEDLTHDGSGVGKIDGYPLFIPNALPGEKITAKITKLNKNYGFARMEN) is the TRAM domain. 4 residues coordinate [4Fe-4S] cluster: C76, C82, C85, and C162. Positions 285, 314, 335, and 383 each coordinate S-adenosyl-L-methionine. The Nucleophile role is filled by C410.

Belongs to the class I-like SAM-binding methyltransferase superfamily. RNA M5U methyltransferase family.

This is an uncharacterized protein from Listeria innocua serovar 6a (strain ATCC BAA-680 / CLIP 11262).